Reading from the N-terminus, the 628-residue chain is tRNA uridine 5-carboxymethylaminomethyl modification enzyme MnmG (628 aa).

Residue 13–18 (GAGHAG) coordinates FAD. 281-295 (GARYCPSIEDKIKKF) serves as a coordination point for NAD(+).

It belongs to the MnmG family. Homodimer. Heterotetramer of two MnmE and two MnmG subunits. It depends on FAD as a cofactor.

Its subcellular location is the cytoplasm. NAD-binding protein involved in the addition of a carboxymethylaminomethyl (cmnm) group at the wobble position (U34) of certain tRNAs, forming tRNA-cmnm(5)s(2)U34. This chain is tRNA uridine 5-carboxymethylaminomethyl modification enzyme MnmG, found in Treponema denticola (strain ATCC 35405 / DSM 14222 / CIP 103919 / JCM 8153 / KCTC 15104).